Reading from the N-terminus, the 1055-residue chain is Ephrin type-B receptor 2 (1055 aa).

The signal sequence occupies residues 1–18 (MALRRLGAALLLLPLLAA). Over 19–543 (VEETLMDSTT…QTSIQEKLPL (525 aa)) the chain is Extracellular. In terms of domain architecture, Eph LBD spans 20-202 (EETLMDSTTA…FYRKCPRIIQ (183 aa)). 2 disulfides stabilise this stretch: cysteine 62-cysteine 184 and cysteine 97-cysteine 107. N-linked (GlcNAc...) asparagine glycans are attached at residues asparagine 265, asparagine 336, asparagine 428, and asparagine 482. Fibronectin type-III domains follow at residues 324-434 (IPSA…TNQA) and 435-530 (APSA…TMTE). The helical transmembrane segment at 544 to 564 (IIGSSAAGLVFLIAVVVIAIV) threads the bilayer. Topologically, residues 565 to 1055 (CNRRGFERAD…KESNDCSCGG (491 aa)) are cytoplasmic. Positions 621-884 (VKIEQVIGAG…QIVNTLDKMI (264 aa)) constitute a Protein kinase domain. Residues 627–635 (IGAGEFGEV) and lysine 653 contribute to the ATP site. The Proton acceptor role is filled by aspartate 746. Residue lysine 891 forms a Glycyl lysine isopeptide (Lys-Gly) (interchain with G-Cter in ubiquitin) linkage. In terms of domain architecture, SAM spans 913–977 (TSFNTVDEWL…LNSIQVMRAQ (65 aa)). A phosphoserine mark is found at serine 983 and valine 984. The PDZ-binding (in isoform 2) signature appears at 984–986 (VEG). The interval 990–1055 (ARRPRATGRT…KESNDCSCGG (66 aa)) is disordered. Residues 991 to 1002 (RRPRATGRTKRC) show a composition bias toward basic residues. Over residues 1025–1049 (KKTDPGRGREIQGIFFKEDSHKESN) the composition is skewed to basic and acidic residues.

This sequence belongs to the protein kinase superfamily. Tyr protein kinase family. Ephrin receptor subfamily. In terms of assembly, heterotetramer upon binding of the ligand. The heterotetramer is composed of an ephrin dimer and a receptor dimer. Interacts (via PDZ-binding motif) with GRIP1 and PICK1 (via PDZ domain). Interacts with ARHGEF15; mediates ARHGEF15 phosphorylation, ubiquitination and degradation by the proteasome. Interacts with AQP1; involved in endolymph production in the inner ear. Interacts with SPSB1 and SPSB4. The phosphorylated form interacts with RASA1 (via SH2 domain 1). Interacts with EFNA5. Interacts with SH2D3C. Autophosphorylated; ligand binding stimulates autophosphorylation on tyrosine residues. Post-translationally, polyubiquitinated; ligand binding stimulates ubiquitination. Ubiquitinated by RNF186 at Lys-891, mainly through 'Lys-27'-linked polyubiquitin chains. Ubiquitinated by CRL2(KLHDC2) E3 ligase complex. In terms of processing, ligand binding induces cleavage by matrix metalloproteinases (MMPs) such as MMP7/MMP9, producing an EphB2/N-terminal fragment (NTF) and a C-terminal long fragment (EphB2-LF). EphB2-LF is further cleaved by MMPs, producing EphB2/CTF1 which is further cleaved by the PS1/gamma-secretase producing EphB2/CTF2. In terms of tissue distribution, brain, heart, lung, kidney, placenta, pancreas, liver and skeletal muscle. Preferentially expressed in fetal brain.

The protein localises to the cell membrane. Its subcellular location is the cell projection. It localises to the axon. It is found in the dendrite. It carries out the reaction L-tyrosyl-[protein] + ATP = O-phospho-L-tyrosyl-[protein] + ADP + H(+). Receptor tyrosine kinase which binds promiscuously transmembrane ephrin-B family ligands residing on adjacent cells, leading to contact-dependent bidirectional signaling into neighboring cells. The signaling pathway downstream of the receptor is referred to as forward signaling while the signaling pathway downstream of the ephrin ligand is referred to as reverse signaling. Functions in axon guidance during development. Involved in the guidance of commissural axons, that form a major interhemispheric connection between the 2 temporal lobes of the cerebral cortex. Also involved in guidance of contralateral inner ear efferent growth cones at the midline and of retinal ganglion cell axons to the optic disk. In addition to axon guidance, also regulates dendritic spines development and maturation and stimulates the formation of excitatory synapses. Upon activation by EFNB1, abolishes the ARHGEF15-mediated negative regulation on excitatory synapse formation. Controls other aspects of development including angiogenesis, palate development and in inner ear development through regulation of endolymph production. Forward and reverse signaling through the EFNB2/EPHB2 complex regulate movement and adhesion of cells that tubularize the urethra and septate the cloaca. May function as a tumor suppressor. May be involved in the regulation of platelet activation and blood coagulation. This chain is Ephrin type-B receptor 2 (EPHB2), found in Homo sapiens (Human).